Consider the following 620-residue polypeptide: LEAF RUST 10 DISEASE-RESISTANCE LOCUS RECEPTOR-LIKE PROTEIN KINASE-like 2.3 (620 aa).

The signal sequence occupies residues 1–30 (MDSLSSMGFQTASFFLILLFLFYHLPCVPS). Over 31-256 (QQERSRLCKP…NNGTYSDNRP (226 aa)) the chain is Extracellular. 9 N-linked (GlcNAc...) asparagine glycosylation sites follow: Asn-75, Asn-85, Asn-93, Asn-132, Asn-148, Asn-162, Asn-189, Asn-231, and Asn-248. Residues 257–277 (FLVTIGTVLGSILCVCVVLFL) traverse the membrane as a helical segment. The Cytoplasmic segment spans residues 278-620 (AFYLNERRIA…SVESSIYSEV (343 aa)). The Protein kinase domain maps to 314–596 (KSFTEVVGRG…SLDPPPKPLL (283 aa)). ATP is bound by residues 320 to 328 (VGRGGFGTV) and Lys-342. Residue Asp-431 is the Proton acceptor of the active site. Positions 586–620 (DSLDPPPKPLLHMPMQNNNAESSQLSVESSIYSEV) are disordered. Over residues 600–620 (MQNNNAESSQLSVESSIYSEV) the composition is skewed to polar residues.

Belongs to the protein kinase superfamily. Ser/Thr protein kinase family.

It localises to the membrane. The enzyme catalyses L-seryl-[protein] + ATP = O-phospho-L-seryl-[protein] + ADP + H(+). It catalyses the reaction L-threonyl-[protein] + ATP = O-phospho-L-threonyl-[protein] + ADP + H(+). The protein is LEAF RUST 10 DISEASE-RESISTANCE LOCUS RECEPTOR-LIKE PROTEIN KINASE-like 2.3 of Arabidopsis thaliana (Mouse-ear cress).